The following is a 311-amino-acid chain: D-alanine--D-alanine ligase (311 aa).

Residues Lys-106–Leu-301 form the ATP-grasp domain. Ile-132–Thr-187 lines the ATP pocket. The Mg(2+) site is built by Asp-255, Glu-268, and Asn-270.

It belongs to the D-alanine--D-alanine ligase family. Requires Mg(2+) as cofactor. The cofactor is Mn(2+).

It is found in the cytoplasm. It carries out the reaction 2 D-alanine + ATP = D-alanyl-D-alanine + ADP + phosphate + H(+). It participates in cell wall biogenesis; peptidoglycan biosynthesis. Functionally, cell wall formation. This chain is D-alanine--D-alanine ligase, found in Alkalilimnicola ehrlichii (strain ATCC BAA-1101 / DSM 17681 / MLHE-1).